The sequence spans 490 residues: MAEEPTTTTLVTPEKLPSPSLTPSEVSESTQDALPTETETLEKVTETNPPETADTTTKPEEETAAEHHPPTVTETETASTEKQEVKDEASQKEVAEEKKSMIPQNLGSFKEESSKLSDLSNSEKKSLDELKHLVREALDNHQFTNTPEEVKIWGIPLLEDDRSDVVLLKFLRAREFKVKDSFAMLKNTIKWRKEFKIDELVEEDLVDDLDKVVFMHGHDREGHPVCYNVYGEFQNKELYNKTFSDEEKRKHFLRTRIQFLERSIRKLDFSSGGVSTIFQVNDMKNSPGLGKKELRSATKQAVELLQDNYPEFVFKQAFINVPWWYLVFYTVIGPFMTPRSKSKLVFAGPSRSAETLFKYISPEQVPVQYGGLSVDPCDCNPDFSLEDSASEITVKPGTKQTVEIIIYEKCELVWEIRVTGWEVSYKAEFVPEEKDAYTVVIQKPRKMRPSDEPVLTHSFKVNELGKVLLTVDNPTSKKKKLVYRFNVKPL.

The span at Met1 to Pro17 shows a compositional bias: low complexity. The segment at Met1–Asn121 is disordered. Ala2 bears the N-acetylalanine mark. Over residues Pro19 to Ala33 the composition is skewed to polar residues. A compositionally biased stretch (low complexity) spans Glu46 to Thr56. Composition is skewed to basic and acidic residues over residues Thr57–Pro69 and Ser79–Ser100. At Ser108 the chain carries Phosphoserine. Over residues Phe109–Asn121 the composition is skewed to basic and acidic residues. Lys193 is covalently cross-linked (Glycyl lysine isopeptide (Lys-Gly) (interchain with G-Cter in ubiquitin)). Residues Glu202–Cys377 form the CRAL-TRIO domain. In terms of domain architecture, GOLD spans Ala353–Val487.

This sequence belongs to the patellin family.

It localises to the membrane. It is found in the cytoplasm. Carrier protein that may be involved in membrane-trafficking events associated with cell plate formation during cytokinesis. Binds to some hydrophobic molecules such as phosphoinositides and promotes their transfer between the different cellular sites. This chain is Patellin-3 (PATL3), found in Arabidopsis thaliana (Mouse-ear cress).